The following is a 441-amino-acid chain: Serine carboxypeptidase-like 2 (441 aa).

Positions 1–29 (MANKYFSSVLKSLLLLLHLVFLSKQHVDS) are cleaved as a signal peptide. Intrachain disulfides connect C88–C331, C252–C266, and C290–C297. The N-linked (GlcNAc...) asparagine glycan is linked to N109. S184 is an active-site residue. An N-linked (GlcNAc...) asparagine glycan is attached at N350. The active site involves D366. N382 carries an N-linked (GlcNAc...) asparagine glycan. H419 is an active-site residue.

The protein belongs to the peptidase S10 family. Expressed in seedlings and roots.

The protein localises to the secreted. Its function is as follows. Probable carboxypeptidase. This Arabidopsis thaliana (Mouse-ear cress) protein is Serine carboxypeptidase-like 2 (SCPL2).